Consider the following 224-residue polypeptide: Transcription factor HEC3 (224 aa).

Disordered stretches follow at residues 22 to 42 (SSNN…DPIG) and 68 to 88 (SLTT…EEEP). The segment covering 28–37 (KNDDHHHQHN) has biased composition (basic and acidic residues). Residues 68–77 (SLTTTTLLSG) show a composition bias toward low complexity. Over residues 78–88 (DQEDDEDEEEP) the composition is skewed to acidic residues. The region spanning 125 to 174 (ISDDPQSVAARHRRERISERIRILQRLVPGGTKMDTASMLDEAIRYVKFL) is the bHLH domain. Residues 183-224 (NNTGYTPPPPQDQASQAVTTSWVSPPPPPSFGRGGRGVGELI) form a disordered region. The span at 194–204 (DQASQAVTTSW) shows a compositional bias: polar residues. The segment covering 214-224 (GRGGRGVGELI) has biased composition (gly residues).

Homodimer. Interacts with SPT. As to expression, gynoecium.

Its subcellular location is the nucleus. Functionally, required for the female reproductive tract development and fertility. The chain is Transcription factor HEC3 (HEC3) from Arabidopsis thaliana (Mouse-ear cress).